The sequence spans 389 residues: Alanine racemase TOXG (389 aa).

Lysine 235 carries the N6-(pyridoxal phosphate)lysine modification.

The protein belongs to the threonine aldolase family. Pyridoxal 5'-phosphate serves as cofactor.

The catalysed reaction is L-alanine = D-alanine. It participates in mycotoxin biosynthesis; HC-toxin biosynthesis. Alanine racemase, part of the diffuse TOX2 gene cluster that mediates the biosynthesis of the HC-toxin, cyclic tetrapeptide of structure cyclo(D-Pro-L-Ala-D-Ala-L-Aeo), where Aeo stands for 2-amino-9,10-epoxi-8-oxodecanoic acid. HC-toxin is a determinant of specificity and virulence in the interaction between the producing fungus and its host, maize. TOXG catalyzes the conversion of L-alanine into D-alanine, an essential precursor for the production of the major forms of HC-toxin by the non-ribosomal peptide synthetase HTS1. The chain is Alanine racemase TOXG from Cochliobolus carbonum (Maize leaf spot fungus).